The sequence spans 261 residues: Pantothenate synthetase (261 aa).

An ATP-binding site is contributed by 29–36; it reads MGALHNGH. Histidine 36 serves as the catalytic Proton donor. Glutamine 60 lines the (R)-pantoate pocket. Glutamine 60 contributes to the beta-alanine binding site. 147 to 150 provides a ligand contact to ATP; it reads GEKD. Residue glutamine 153 participates in (R)-pantoate binding. 184-187 lines the ATP pocket; the sequence is LSSR.

The protein belongs to the pantothenate synthetase family. In terms of assembly, homodimer.

It localises to the cytoplasm. The catalysed reaction is (R)-pantoate + beta-alanine + ATP = (R)-pantothenate + AMP + diphosphate + H(+). The protein operates within cofactor biosynthesis; (R)-pantothenate biosynthesis; (R)-pantothenate from (R)-pantoate and beta-alanine: step 1/1. Catalyzes the condensation of pantoate with beta-alanine in an ATP-dependent reaction via a pantoyl-adenylate intermediate. In Francisella tularensis subsp. tularensis (strain FSC 198), this protein is Pantothenate synthetase.